A 218-amino-acid polypeptide reads, in one-letter code: NAD(P)H-quinone oxidoreductase subunit U, chloroplastic (218 aa).

The N-terminal 53 residues, 1-53 (MASLSTITQPSLVHIPGESVLHHVPSTCSFPWKPTINTKRIICSPARNSSEVS), are a transit peptide targeting the chloroplast. Residues 47 to 72 (RNSSEVSAEAETEGGSSTAVDEAPKE) are disordered. A J domain is found at 95-159 (DHYGRLGIFR…EERRMYDWSL (65 aa)). The chain crosses the membrane as a helical span at residues 197–217 (ILGYFIGAWLVLGVALSVAFN).

As to quaternary structure, part of the chloroplast NDH complex, composed of a mixture of chloroplast and nucleus encoded subunits. Component of the electron donor-binding subcomplex, at least composed of NDHS, NDHT and NDHU.

It localises to the plastid. Its subcellular location is the chloroplast thylakoid membrane. The catalysed reaction is a plastoquinone + NADH + (n+1) H(+)(in) = a plastoquinol + NAD(+) + n H(+)(out). It carries out the reaction a plastoquinone + NADPH + (n+1) H(+)(in) = a plastoquinol + NADP(+) + n H(+)(out). Functionally, NDH shuttles electrons from NAD(P)H:plastoquinone, via FMN and iron-sulfur (Fe-S) centers, to quinones in the photosynthetic chain and possibly in a chloroplast respiratory chain. The immediate electron acceptor for the enzyme in this species is believed to be plastoquinone. Couples the redox reaction to proton translocation, and thus conserves the redox energy in a proton gradient. The protein is NAD(P)H-quinone oxidoreductase subunit U, chloroplastic of Arabidopsis thaliana (Mouse-ear cress).